We begin with the raw amino-acid sequence, 353 residues long: S-adenosylmethionine:tRNA ribosyltransferase-isomerase (353 aa).

This sequence belongs to the QueA family. As to quaternary structure, monomer.

The protein resides in the cytoplasm. It carries out the reaction 7-aminomethyl-7-carbaguanosine(34) in tRNA + S-adenosyl-L-methionine = epoxyqueuosine(34) in tRNA + adenine + L-methionine + 2 H(+). It participates in tRNA modification; tRNA-queuosine biosynthesis. In terms of biological role, transfers and isomerizes the ribose moiety from AdoMet to the 7-aminomethyl group of 7-deazaguanine (preQ1-tRNA) to give epoxyqueuosine (oQ-tRNA). The chain is S-adenosylmethionine:tRNA ribosyltransferase-isomerase from Blochmanniella floridana.